Consider the following 1007-residue polypeptide: Kinesin-like protein KIN-7D, chloroplastic (1007 aa).

A chloroplast-targeting transit peptide spans 1–53 (MATRPASRQRRASSAAAAVAVVRSSPQPQQQQQQQLPIPQSGSPTSTTTTTTS). The segment covering 1-55 (MATRPASRQRRASSAAAAVAVVRSSPQPQQQQQQQLPIPQSGSPTSTTTTTTSSS) has biased composition (low complexity). Positions 1 to 79 (MATRPASRQR…LFAGLDEDPA (79 aa)) are disordered. Residues 83-402 (NVTVTVRFRP…LKFAHRAKRI (320 aa)) enclose the Kinesin motor domain. Residue 163–170 (GVTSSGKT) coordinates ATP. Positions 403 to 495 (EVQASQNKII…QRLTKLILVS (93 aa)) form a coiled coil. The disordered stretch occupies residues 579–607 (ILTSSEGDKSSLTKSTAPSTPIGESVNFP). Coiled-coil stretches lie at residues 687-716 (NNEKIQMEMKKVNDEIKGKKHQIASLERQI), 754-791 (AADNRVIQDQLNEKTTECMELQEEVAHLKEQLYQTLQA), and 836-907 (SVEI…SVRS). The disordered stretch occupies residues 901–941 (ELASVRSPTPRRANSGLRGTRRDSISRRHEPAPRRDNNAGY). Over residues 920 to 941 (TRRDSISRRHEPAPRRDNNAGY) the composition is skewed to basic and acidic residues. Positions 942–982 (EREKALEAVLMEKEQKEAELQRRIEESKQKEAFLESELANM) form a coiled coil.

The protein belongs to the TRAFAC class myosin-kinesin ATPase superfamily. Kinesin family. KIN-7 subfamily. In terms of assembly, binds microtubules. Homodimer. Mg(2+) serves as cofactor.

The protein resides in the plastid. It localises to the chloroplast. In terms of biological role, probable minus end-directed motor protein with a microtubule-enhanced ATPase activity. Binds ATP/ADP in vitro. Retains total enzymatic activity even after the removal of the ADP bound in the active site. The sequence is that of Kinesin-like protein KIN-7D, chloroplastic from Oryza sativa subsp. japonica (Rice).